The chain runs to 298 residues: Pyruvate synthase subunit PorB (298 aa).

4 residues coordinate [4Fe-4S] cluster: Cys-19, Cys-22, Cys-47, and Cys-218.

Heterotetramer of one alpha, one beta, one delta and one gamma chain. Requires [4Fe-4S] cluster as cofactor.

It catalyses the reaction 2 oxidized [2Fe-2S]-[ferredoxin] + pyruvate + CoA = 2 reduced [2Fe-2S]-[ferredoxin] + acetyl-CoA + CO2 + H(+). This Methanocaldococcus jannaschii (strain ATCC 43067 / DSM 2661 / JAL-1 / JCM 10045 / NBRC 100440) (Methanococcus jannaschii) protein is Pyruvate synthase subunit PorB (porB).